The following is a 450-amino-acid chain: Protein tweety homolog 1 (450 aa).

At 1 to 43 the chain is on the extracellular side; sequence MGAPPGYRPSAWVHLLHQLPRADFQLRPVPSGFAPRDQEYQQA. A helical transmembrane segment spans residues 44-64; it reads LLLVAALAGLGLGLSLIFIAV. Over 65-88 the chain is Cytoplasmic; it reads YLIRFCCCRPPEPPGAKSPPPGGG. The helical transmembrane segment at 89–109 threads the bilayer; the sequence is CVTWSCIAALLVGCAGIGIGF. Residues 110–214 are Extracellular-facing; it reads YGNSETSDGV…DVTFVEEYRW (105 aa). An N-linked (GlcNAc...) asparagine glycan is attached at Asn-130. A helical transmembrane segment spans residues 215-235; the sequence is LAYVLLLLLVLLVCLFTLLGL. The Cytoplasmic portion of the chain corresponds to 236–240; that stretch reads AKQSK. The chain crosses the membrane as a helical span at residues 241–261; it reads WLVVVMTAMSLLVLVLSWGSM. Over 262–390 the chain is Extracellular; that stretch reads GLEAATAVGL…LRGLCEDALE (129 aa). 2 disulfide bridges follow: Cys-275/Cys-385 and Cys-303/Cys-370. Residues Asn-284 and Asn-355 are each glycosylated (N-linked (GlcNAc...) asparagine). Residues 391–411 traverse the membrane as a helical segment; sequence GLLFLMLFSLLSAGALATTLC. The Cytoplasmic portion of the chain corresponds to 412–450; the sequence is SLPRAWALFPPSDDYDDTDDDDPFNPQESKRFVQWQSSI. A disordered region spans residues 428–450; that stretch reads DTDDDDPFNPQESKRFVQWQSSI. The residue at position 440 (Ser-440) is a Phosphoserine.

The protein belongs to the tweety family. As to quaternary structure, homotetramer; disulfide-linked. Homodimer. In terms of processing, N-glycosylated. Contains high-mannose, hybrid and complex oligosaccharides.

Its subcellular location is the cell membrane. The enzyme catalyses chloride(in) = chloride(out). It catalyses the reaction L-glutamate(out) = L-glutamate(in). Its function is as follows. Calcium-independent, swelling-dependent volume-regulated anion channel (VRAC-swell) which plays a pivotal role in the process of regulatory volume decrease (RVD) in the brain through the efflux of anions like chloride and organic osmolytes like glutamate. In Rattus norvegicus (Rat), this protein is Protein tweety homolog 1 (Ttyh1).